The chain runs to 489 residues: 3-octaprenyl-4-hydroxybenzoate carboxy-lyase (489 aa).

A Mn(2+)-binding site is contributed by Asn172. Residues 175 to 177, 189 to 191, and 194 to 195 each bind prenylated FMN; these read IYR, RWL, and RG. Glu238 provides a ligand contact to Mn(2+). Catalysis depends on Asp287, which acts as the Proton donor.

The protein belongs to the UbiD family. Homohexamer. Prenylated FMN serves as cofactor. It depends on Mn(2+) as a cofactor.

Its subcellular location is the cell membrane. The catalysed reaction is a 4-hydroxy-3-(all-trans-polyprenyl)benzoate + H(+) = a 2-(all-trans-polyprenyl)phenol + CO2. It participates in cofactor biosynthesis; ubiquinone biosynthesis. Catalyzes the decarboxylation of 3-octaprenyl-4-hydroxy benzoate to 2-octaprenylphenol, an intermediate step in ubiquinone biosynthesis. This chain is 3-octaprenyl-4-hydroxybenzoate carboxy-lyase, found in Salmonella paratyphi B (strain ATCC BAA-1250 / SPB7).